The primary structure comprises 290 residues: ATP synthase gamma chain (290 aa).

This sequence belongs to the ATPase gamma chain family. F-type ATPases have 2 components, CF(1) - the catalytic core - and CF(0) - the membrane proton channel. CF(1) has five subunits: alpha(3), beta(3), gamma(1), delta(1), epsilon(1). CF(0) has three main subunits: a, b and c.

Its subcellular location is the cell inner membrane. Its function is as follows. Produces ATP from ADP in the presence of a proton gradient across the membrane. The gamma chain is believed to be important in regulating ATPase activity and the flow of protons through the CF(0) complex. The chain is ATP synthase gamma chain from Chlorobium luteolum (strain DSM 273 / BCRC 81028 / 2530) (Pelodictyon luteolum).